Here is a 449-residue protein sequence, read N- to C-terminus: Adenylosuccinate synthetase isozyme 1 A (449 aa).

Residues 1-10 (MSHKSCYTNP) are compositionally biased toward polar residues. The tract at residues 1–22 (MSHKSCYTNPGTGGKRPRNDKG) is disordered. GTP contacts are provided by residues 34–40 (GDEGKGK) and 62–64 (GHT). The Proton acceptor role is filled by D35. Residues D35 and G62 each coordinate Mg(2+). Residue D35 coordinates substrate. Residues 35–38 (DEGK), 60–63 (NAGH), T155, R169, N248, T263, and R327 contribute to the IMP site. The Proton donor role is filled by H63. 323-329 (VTTGRKR) contacts substrate. GTP is bound by residues R329, 355 to 357 (KLD), and 437 to 440 (GVGK).

Belongs to the adenylosuccinate synthetase family. Homodimer. Mg(2+) is required as a cofactor.

Its subcellular location is the cytoplasm. It carries out the reaction IMP + L-aspartate + GTP = N(6)-(1,2-dicarboxyethyl)-AMP + GDP + phosphate + 2 H(+). Its pathway is purine metabolism; AMP biosynthesis via de novo pathway; AMP from IMP: step 1/2. Functionally, component of the purine nucleotide cycle (PNC), which interconverts IMP and AMP to regulate the nucleotide levels in various tissues, and which contributes to glycolysis and ammoniagenesis. Catalyzes the first committed step in the biosynthesis of AMP from IMP. The protein is Adenylosuccinate synthetase isozyme 1 A (adss1a) of Salmo salar (Atlantic salmon).